The following is a 106-amino-acid chain: uncharacterized protein (106 aa).

Disordered stretches follow at residues 33-64 (FKTS…SRND) and 87-106 (NLTG…AVSK). Over residues 52 to 63 (DGKKQESLESRN) the composition is skewed to basic and acidic residues. Residues 87–99 (NLTGLESGGSSPP) show a composition bias toward polar residues.

The protein resides in the mitochondrion. This is an uncharacterized protein from Arabidopsis thaliana (Mouse-ear cress).